A 105-amino-acid chain; its full sequence is Large ribosomal subunit protein uL24 (105 aa).

This sequence belongs to the universal ribosomal protein uL24 family. Part of the 50S ribosomal subunit.

Its function is as follows. One of two assembly initiator proteins, it binds directly to the 5'-end of the 23S rRNA, where it nucleates assembly of the 50S subunit. In terms of biological role, one of the proteins that surrounds the polypeptide exit tunnel on the outside of the subunit. This Staphylococcus carnosus (strain TM300) protein is Large ribosomal subunit protein uL24.